We begin with the raw amino-acid sequence, 137 residues long: Basic phospholipase A2 homolog Bsc-K49 (137 aa).

An N-terminal signal peptide occupies residues 1–16 (MRTLWIVAVLLVGVEG). 7 disulfide bridges follow: Cys-42/Cys-131, Cys-44/Cys-60, Cys-59/Cys-111, Cys-65/Cys-137, Cys-66/Cys-104, Cys-73/Cys-97, and Cys-91/Cys-102. The important for membrane-damaging activities in eukaryotes and bacteria; heparin-binding stretch occupies residues 121–133 (KNYKITMKMFCKK).

This sequence belongs to the phospholipase A2 family. Group II subfamily. K49 sub-subfamily. As to quaternary structure, homodimer; non-covalently linked. In terms of tissue distribution, expressed by the venom gland.

The protein resides in the secreted. Snake venom phospholipase A2 that lacks enzymatic activity. Is myotoxic, and displays edema-inducing activities. A model of myotoxic mechanism has been proposed: an apo Lys49-PLA2 is activated by the entrance of a hydrophobic molecule (e.g. fatty acid) at the hydrophobic channel of the protein leading to a reorientation of a monomer. This reorientation causes a transition between 'inactive' to 'active' states, causing alignment of C-terminal and membrane-docking sites (MDoS) side-by-side and putting the membrane-disruption sites (MDiS) in the same plane, exposed to solvent and in a symmetric position for both monomers. The MDoS region stabilizes the toxin on membrane by the interaction of charged residues with phospholipid head groups. Subsequently, the MDiS region destabilizes the membrane with penetration of hydrophobic residues. This insertion causes a disorganization of the membrane, allowing an uncontrolled influx of ions (i.e. calcium and sodium), and eventually triggering irreversible intracellular alterations and cell death. The sequence is that of Basic phospholipase A2 homolog Bsc-K49 from Bothriechis schlegelii (Eyelash palm pitviper).